The primary structure comprises 79 residues: UPF0349 protein BCE33L4669 (79 aa).

Belongs to the UPF0349 family.

The polypeptide is UPF0349 protein BCE33L4669 (Bacillus cereus (strain ZK / E33L)).